The following is a 297-amino-acid chain: MAELTALESLIEMGFPKGRAEKALALTGNQGIEAAMDWLMEHEDDPDVDEPLATPLGHVLGREPTPSEQGGPKGPGSAVGEGKPVLTEEERQEQTKRMLELVAQKQREREEREEREALERERQRRRQGQELTAARQRLQEDEMRRAAEERRREKAEELEARQRVREKIERDKAERAKKYGGNVGSQPSPPATEPGPVPSSPSREPPTKREYDQCRIQVRLPDGTSLTQTFRAREQLAAVRLYVELHRGEELGGAQDPVQLLSGFPRRAFSEADMERPLQELGLVPSAVLIVAKKCPG.

The residue at position 2 (Ala-2) is an N-acetylalanine. Residues 2 to 42 (AELTALESLIEMGFPKGRAEKALALTGNQGIEAAMDWLMEH) form the UBA domain. Residues 40–210 (MEHEDDPDVD…PSREPPTKRE (171 aa)) are disordered. Residues 43–297 (EDDPDVDEPL…VLIVAKKCPG (255 aa)) form an interaction with BRCA1 region. 2 stretches are compositionally biased toward basic and acidic residues: residues 86-122 (LTEE…ERER) and 137-177 (RLQE…ERAK). The stretch at 86 to 176 (LTEEERQEQT…KIERDKAERA (91 aa)) forms a coiled coil. Positions 187 to 199 (PSPPATEPGPVPS) are enriched in pro residues. Ser-199 carries the phosphoserine modification. Position 200 is a phosphoserine; by MAPK12 (Ser-200). Thr-207 and Thr-229 each carry phosphothreonine. A UBX domain is found at 209–291 (REYDQCRIQV…GLVPSAVLIV (83 aa)). Residue Ser-270 is modified to Phosphoserine.

In terms of assembly, component of a complex required to couple retrotranslocation, ubiquitination and deglycosylation composed of NGLY1, SAKS1, AMFR, VCP and RAD23B. Interacts with HOMER2. Interacts directly with VCP. Interacts with BRCA1 and BARD1; interaction takes place when BRCA1 is not autoubiquitinated bur is strongly enhanced in the presence of autoubiquitinated BRCA1.

Its subcellular location is the cytoplasm. Its function is as follows. Ubiquitin-binding protein that interacts with the BRCA1-BARD1 heterodimer, and regulates its activity. Specifically binds 'Lys-6'-linked polyubiquitin chains. Interaction with autoubiquitinated BRCA1, leads to inhibit the E3 ubiquitin-protein ligase activity of the BRCA1-BARD1 heterodimer. Component of a complex required to couple deglycosylation and proteasome-mediated degradation of misfolded proteins in the endoplasmic reticulum that are retrotranslocated in the cytosol. In Bos taurus (Bovine), this protein is UBX domain-containing protein 1 (UBXN1).